Reading from the N-terminus, the 422-residue chain is Histidine--tRNA ligase (422 aa).

Belongs to the class-II aminoacyl-tRNA synthetase family. In terms of assembly, homodimer.

The protein resides in the cytoplasm. It catalyses the reaction tRNA(His) + L-histidine + ATP = L-histidyl-tRNA(His) + AMP + diphosphate + H(+). The sequence is that of Histidine--tRNA ligase from Vibrio atlanticus (strain LGP32) (Vibrio splendidus (strain Mel32)).